The chain runs to 447 residues: Argininosuccinate synthase (447 aa).

Residues 17-25 (AFSGGLDTS) and Ala-43 each bind ATP. Tyr-99 contacts L-citrulline. ATP-binding residues include Gly-129 and Thr-131. Positions 131, 135, and 136 each coordinate L-aspartate. Asn-135 lines the L-citrulline pocket. Asp-136 provides a ligand contact to ATP. Residues Arg-139 and Ser-192 each coordinate L-citrulline. Asp-194 contacts ATP. The L-citrulline site is built by Thr-201, Glu-203, and Glu-280.

The protein belongs to the argininosuccinate synthase family. Type 2 subfamily. Homotetramer.

Its subcellular location is the cytoplasm. It carries out the reaction L-citrulline + L-aspartate + ATP = 2-(N(omega)-L-arginino)succinate + AMP + diphosphate + H(+). Its pathway is amino-acid biosynthesis; L-arginine biosynthesis; L-arginine from L-ornithine and carbamoyl phosphate: step 2/3. This Escherichia coli (strain K12 / MC4100 / BW2952) protein is Argininosuccinate synthase.